The chain runs to 605 residues: Probable potassium transport system protein Kup 2 (605 aa).

12 helical membrane passes run 17–37 (GLVF…IMTL), 45–65 (VLGI…VEYA), 96–116 (MAFA…DGVI), 139–159 (AQGG…IFQF), 169–189 (FGPI…VSII), 211–231 (GLAG…GEAL), 246–266 (AWYF…AFIL), 286–306 (LYIP…QALI), 338–358 (IYIG…MILF), 367–387 (AYGL…TMIF), 394–414 (WKVP…TANL), and 417–437 (LPHG…IMVI).

This sequence belongs to the HAK/KUP transporter (TC 2.A.72) family.

The protein localises to the cell inner membrane. It catalyses the reaction K(+)(in) + H(+)(in) = K(+)(out) + H(+)(out). In terms of biological role, transport of potassium into the cell. Likely operates as a K(+):H(+) symporter. The chain is Probable potassium transport system protein Kup 2 from Geobacter sulfurreducens (strain ATCC 51573 / DSM 12127 / PCA).